A 257-amino-acid chain; its full sequence is Zinc transporter ZupT (257 aa).

A run of 3 helical transmembrane segments spans residues 5–25 (LILT…GVLG), 32–52 (LLAF…LMEM), and 61–81 (GMSP…YFGL). Fe(2+) is bound by residues N120 and E123. E123 and H148 together coordinate Zn(2+). Transmembrane regions (helical) follow at residues 137–157 (LGFG…LAVA), 171–191 (ILWA…AWLI), 195–215 (MISP…MVAL), and 236–256 (GVLC…TAGI). Fe(2+) is bound by residues N149, E152, and E181. E152 provides a ligand contact to Zn(2+).

It belongs to the ZIP transporter (TC 2.A.5) family. ZupT subfamily.

The protein localises to the cell inner membrane. It carries out the reaction Zn(2+)(in) = Zn(2+)(out). Functionally, mediates zinc uptake. May also transport other divalent cations. The polypeptide is Zinc transporter ZupT (Escherichia coli O45:K1 (strain S88 / ExPEC)).